The sequence spans 1331 residues: DNA replication ATP-dependent helicase/nuclease JHS1 (1331 aa).

The tract at residues Met1–Ser98 is disordered. The Nuclear localization signal signature appears at Pro2 to Lys8. The segment covering Ala11 to Ile31 has biased composition (polar residues). Residues Gln40–Thr52 show a composition bias toward low complexity. Positions Asp57–Asn81 are enriched in polar residues. Residues Glu82–Asp91 are compositionally biased toward basic and acidic residues. The interval Glu362 to Ile811 is nuclease activity. Cys422, Cys666, Cys669, and Cys675 together coordinate [4Fe-4S] cluster. The interval Leu812 to Pro1331 is helicase activity. The UvrD-like helicase ATP-binding domain maps to Asn924–Ser1271. ATP is bound at residue Gly945–Thr952.

The protein belongs to the DNA2/NAM7 helicase family. It depends on [4Fe-4S] cluster as a cofactor. Strongly expressed in meristems, including both root and shoot apical meristems (RAM and SAM). Also present in the vasculature and in young floral tissues.

It localises to the nucleus. The protein resides in the chromosome. It catalyses the reaction ATP + H2O = ADP + phosphate + H(+). In terms of biological role, essential protein required during embryogenesis. Key enzyme involved in DNA replication and damage repair, shoot apical meristem (SAM) maintenance, and development. Involved in Okazaki fragments processing. Possesses different enzymatic activities, such as single-stranded DNA (ssDNA)-dependent ATPase, 5'-3' helicase and endonuclease activities. While the ATPase and endonuclease activities are well-defined and play a key role in Okazaki fragments processing and DSB repair, the 5'-3' DNA helicase activity is atypical: it cannot load onto its tracking strand internally and has an absolute free 5'-end requirement. The protein is DNA replication ATP-dependent helicase/nuclease JHS1 of Arabidopsis thaliana (Mouse-ear cress).